Here is a 330-residue protein sequence, read N- to C-terminus: Deoxyhypusine hydroxylase (330 aa).

HEAT-like PBS-type repeat units follow at residues 57 to 83, 90 to 116, and 199 to 225; these read LKHELAYCLGQIRNPLALPVLESVLRN, VRHEAAEAMGAISTADSIPILKQYLSD, and ERYRAMFALRNIGSPAAVDALAAGFSG. Positions 59, 60, 92, and 93 each coordinate Fe cation. Fe cation is bound by residues histidine 232, glutamate 233, histidine 265, and glutamate 266. An HEAT-like PBS-type 4 repeat occupies 263 to 289; that stretch reads VRHEAAEALGGIATPEVLPPLKEWVAR.

Belongs to the deoxyhypusine hydroxylase family. Requires Fe(2+) as cofactor.

It is found in the cytoplasm. Its subcellular location is the nucleus. It catalyses the reaction [eIF5A protein]-deoxyhypusine + AH2 + O2 = [eIF5A protein]-hypusine + A + H2O. It participates in protein modification; eIF5A hypusination. Its function is as follows. Catalyzes the hydroxylation of the N(6)-(4-aminobutyl)-L-lysine intermediate to form hypusine, an essential post-translational modification only found in mature eIF-5A factor. The polypeptide is Deoxyhypusine hydroxylase (Lentinula edodes (Shiitake mushroom)).